The chain runs to 38 residues: Large ribosomal subunit protein bL36 (38 aa).

This sequence belongs to the bacterial ribosomal protein bL36 family.

The sequence is that of Large ribosomal subunit protein bL36 from Prosthecochloris aestuarii (strain DSM 271 / SK 413).